A 65-amino-acid polypeptide reads, in one-letter code: Beta-defensin 106A (65 aa).

Residues 1–20 form the signal peptide; sequence MRTFLFLFVVLFFLTPAKNA. 3 disulfide bridges follow: cysteine 26–cysteine 53, cysteine 33–cysteine 47, and cysteine 37–cysteine 54.

Belongs to the beta-defensin family. In terms of assembly, monomer. Interacts with CCR2 (via extracellular N-terminal region); this interaction may preferentially require specific tyrosine sulfation on CCR2.

Its subcellular location is the secreted. The protein localises to the membrane. Functionally, has antibacterial activity. Acts as a ligand for C-C chemokine receptor CCR2. In Hylobates lar (Lar gibbon), this protein is Beta-defensin 106A (DEFB106A).